We begin with the raw amino-acid sequence, 114 residues long: Phosphoribosyl-ATP pyrophosphatase (114 aa).

It belongs to the PRA-PH family.

It localises to the cytoplasm. It catalyses the reaction 1-(5-phospho-beta-D-ribosyl)-ATP + H2O = 1-(5-phospho-beta-D-ribosyl)-5'-AMP + diphosphate + H(+). It functions in the pathway amino-acid biosynthesis; L-histidine biosynthesis; L-histidine from 5-phospho-alpha-D-ribose 1-diphosphate: step 2/9. This is Phosphoribosyl-ATP pyrophosphatase from Leuconostoc mesenteroides subsp. mesenteroides (strain ATCC 8293 / DSM 20343 / BCRC 11652 / CCM 1803 / JCM 6124 / NCDO 523 / NBRC 100496 / NCIMB 8023 / NCTC 12954 / NRRL B-1118 / 37Y).